The chain runs to 1047 residues: tRNA wybutosine-synthesizing protein 4 (1047 aa).

Residues R69, G95, D122, 169 to 170, and E196 contribute to the S-adenosyl-L-methionine site; that span reads DL. Residues 814-1003 form the JmjC domain; that stretch reads GRQYLRSISA…AAGRDVYGNR (190 aa).

It belongs to the methyltransferase superfamily. LCMT family.

It carries out the reaction 7-[(3S)-3-amino-3-carboxypropyl]wyosine(37) in tRNA(Phe) + S-adenosyl-L-methionine = 7-[(3S)-(3-amino-3-methoxycarbonyl)propyl]wyosine(37) in tRNA(Phe) + S-adenosyl-L-homocysteine. The enzyme catalyses 7-[(3S)-(3-amino-3-methoxycarbonyl)propyl]wyosine(37) in tRNA(Phe) + S-adenosyl-L-methionine + CO2 = wybutosine(37) in tRNA(Phe) + S-adenosyl-L-homocysteine + 2 H(+). It participates in tRNA modification; wybutosine-tRNA(Phe) biosynthesis. Functionally, probable S-adenosyl-L-methionine-dependent methyltransferase that acts as a component of the wybutosine biosynthesis pathway. Wybutosine is a hyper modified guanosine with a tricyclic base found at the 3'-position adjacent to the anticodon of eukaryotic phenylalanine tRNA. May methylate the carboxyl group of leucine residues to form alpha-leucine ester residues. The polypeptide is tRNA wybutosine-synthesizing protein 4 (ppm2) (Aspergillus fumigatus (strain ATCC MYA-4609 / CBS 101355 / FGSC A1100 / Af293) (Neosartorya fumigata)).